The primary structure comprises 211 residues: COMM domain-containing protein 10 (211 aa).

Positions 131–211 (QLNEIGWRLH…SIQEKLDTLA (81 aa)) constitute a COMM domain.

Belongs to the COMM domain-containing protein 10 family. In terms of assembly, component of the commander complex consisting of the CCC subcomplex and the retriever subcomplex. Component of the CCC subcomplex.

Scaffold protein in the commander complex that is essential for endosomal recycling of transmembrane cargos; the commander complex is composed of the CCC subcomplex and the retriever subcomplex. This chain is COMM domain-containing protein 10 (commd10), found in Dictyostelium discoideum (Social amoeba).